Consider the following 189-residue polypeptide: Glycerol-3-phosphate acyltransferase (189 aa).

Helical transmembrane passes span 1 to 21 (MFWL…AILL), 51 to 71 (LAVL…LIAH), 77 to 97 (LQQQ…PLYF), 111 to 131 (MLLG…ALTF), and 151 to 171 (LLAW…LLIV).

This sequence belongs to the PlsY family. Probably interacts with PlsX.

The protein localises to the cell inner membrane. It carries out the reaction an acyl phosphate + sn-glycerol 3-phosphate = a 1-acyl-sn-glycero-3-phosphate + phosphate. Its pathway is lipid metabolism; phospholipid metabolism. In terms of biological role, catalyzes the transfer of an acyl group from acyl-phosphate (acyl-PO(4)) to glycerol-3-phosphate (G3P) to form lysophosphatidic acid (LPA). This enzyme utilizes acyl-phosphate as fatty acyl donor, but not acyl-CoA or acyl-ACP. The protein is Glycerol-3-phosphate acyltransferase of Pseudomonas fluorescens (strain ATCC BAA-477 / NRRL B-23932 / Pf-5).